The sequence spans 100 residues: Small ribosomal subunit protein uS14c (100 aa).

This sequence belongs to the universal ribosomal protein uS14 family. Part of the 30S ribosomal subunit.

It localises to the plastid. Its subcellular location is the chloroplast. Functionally, binds 16S rRNA, required for the assembly of 30S particles. This chain is Small ribosomal subunit protein uS14c, found in Cicer arietinum (Chickpea).